A 231-amino-acid chain; its full sequence is 5'-methylthioadenosine/S-adenosylhomocysteine nucleosidase (231 aa).

Glu13 serves as the catalytic Proton acceptor. Residues Gly79, Met153, and 174–175 (ME) each bind substrate. Catalysis depends on Asp198, which acts as the Proton donor.

The protein belongs to the PNP/UDP phosphorylase family. MtnN subfamily.

It catalyses the reaction S-adenosyl-L-homocysteine + H2O = S-(5-deoxy-D-ribos-5-yl)-L-homocysteine + adenine. The enzyme catalyses S-methyl-5'-thioadenosine + H2O = 5-(methylsulfanyl)-D-ribose + adenine. The catalysed reaction is 5'-deoxyadenosine + H2O = 5-deoxy-D-ribose + adenine. The protein operates within amino-acid biosynthesis; L-methionine biosynthesis via salvage pathway; S-methyl-5-thio-alpha-D-ribose 1-phosphate from S-methyl-5'-thioadenosine (hydrolase route): step 1/2. Its function is as follows. Catalyzes the irreversible cleavage of the glycosidic bond in both 5'-methylthioadenosine (MTA) and S-adenosylhomocysteine (SAH/AdoHcy) to adenine and the corresponding thioribose, 5'-methylthioribose and S-ribosylhomocysteine, respectively. Also cleaves 5'-deoxyadenosine, a toxic by-product of radical S-adenosylmethionine (SAM) enzymes, into 5-deoxyribose and adenine. The protein is 5'-methylthioadenosine/S-adenosylhomocysteine nucleosidase of Halalkalibacterium halodurans (strain ATCC BAA-125 / DSM 18197 / FERM 7344 / JCM 9153 / C-125) (Bacillus halodurans).